A 322-amino-acid chain; its full sequence is Phosphoserine phosphatase (322 aa).

10-12 (PED) is a binding site for substrate. Residues D12, D116, and D118 each coordinate Mg(2+). Catalysis depends on D116, which acts as the Nucleophile. The Proton donor role is filled by D118. Residues E125, R161, 204-205 (SG), and K249 each bind substrate. Residue D272 coordinates Mg(2+). Residue N275 participates in substrate binding.

The protein belongs to the HAD-like hydrolase superfamily. SerB family. Mg(2+) is required as a cofactor.

It carries out the reaction O-phospho-L-serine + H2O = L-serine + phosphate. The catalysed reaction is O-phospho-D-serine + H2O = D-serine + phosphate. The protein operates within amino-acid biosynthesis; L-serine biosynthesis; L-serine from 3-phospho-D-glycerate: step 3/3. Functionally, catalyzes the dephosphorylation of phosphoserine (P-Ser). The protein is Phosphoserine phosphatase (serB) of Escherichia coli O157:H7.